Consider the following 73-residue polypeptide: Large ribosomal subunit protein uL29 (73 aa).

This sequence belongs to the universal ribosomal protein uL29 family.

This is Large ribosomal subunit protein uL29 (rpl29) from Saccharolobus solfataricus (strain ATCC 35092 / DSM 1617 / JCM 11322 / P2) (Sulfolobus solfataricus).